Consider the following 333-residue polypeptide: Adenosine deaminase (333 aa).

H12 and H14 together coordinate Zn(2+). Substrate-binding residues include H14, D16, and G170. Residue H197 coordinates Zn(2+). E200 (proton donor) is an active-site residue. D278 lines the Zn(2+) pocket. D279 is a binding site for substrate.

Belongs to the metallo-dependent hydrolases superfamily. Adenosine and AMP deaminases family. Adenosine deaminase subfamily. Zn(2+) is required as a cofactor.

The catalysed reaction is adenosine + H2O + H(+) = inosine + NH4(+). The enzyme catalyses 2'-deoxyadenosine + H2O + H(+) = 2'-deoxyinosine + NH4(+). Its function is as follows. Catalyzes the hydrolytic deamination of adenosine and 2-deoxyadenosine. The chain is Adenosine deaminase from Aliivibrio fischeri (strain ATCC 700601 / ES114) (Vibrio fischeri).